The primary structure comprises 283 residues: Ubiquinone biosynthesis protein COQ4, mitochondrial (283 aa).

Residues 1 to 25 (MAIAKSVRARAVGLRSLRVLCAQRS) constitute a mitochondrion transit peptide. His166, Asp167, His170, and Glu182 together coordinate Zn(2+).

It belongs to the COQ4 family. Component of a multi-subunit COQ enzyme complex, composed of at least COQ3, COQ4, COQ5, COQ6, COQ7 and COQ9. The cofactor is Zn(2+).

The protein localises to the mitochondrion inner membrane. It catalyses the reaction a 4-hydroxy-3-methoxy-5-(all-trans-polyprenyl)benzoate + H(+) = a 2-methoxy-6-(all-trans-polyprenyl)phenol + CO2. The protein operates within cofactor biosynthesis; ubiquinone biosynthesis. In terms of biological role, lyase that catalyzes the C1-decarboxylation of 4-hydroxy-3-methoxy-5-(all-trans-polyprenyl)benzoic acid into 2-methoxy-6-(all-trans-polyprenyl)phenol during ubiquinone biosynthesis. The chain is Ubiquinone biosynthesis protein COQ4, mitochondrial from Coccidioides immitis (strain RS) (Valley fever fungus).